Reading from the N-terminus, the 474-residue chain is Methylenetetrahydrofolate--tRNA-(uracil-5-)-methyltransferase TrmFO (474 aa).

13 to 18 (GGGLAG) provides a ligand contact to FAD.

It belongs to the MnmG family. TrmFO subfamily. Requires FAD as cofactor.

Its subcellular location is the cytoplasm. The enzyme catalyses uridine(54) in tRNA + (6R)-5,10-methylene-5,6,7,8-tetrahydrofolate + NADH + H(+) = 5-methyluridine(54) in tRNA + (6S)-5,6,7,8-tetrahydrofolate + NAD(+). It catalyses the reaction uridine(54) in tRNA + (6R)-5,10-methylene-5,6,7,8-tetrahydrofolate + NADPH + H(+) = 5-methyluridine(54) in tRNA + (6S)-5,6,7,8-tetrahydrofolate + NADP(+). Functionally, catalyzes the folate-dependent formation of 5-methyl-uridine at position 54 (M-5-U54) in all tRNAs. The polypeptide is Methylenetetrahydrofolate--tRNA-(uracil-5-)-methyltransferase TrmFO (Bartonella tribocorum (strain CIP 105476 / IBS 506)).